Reading from the N-terminus, the 221-residue chain is Riboflavin kinase (221 aa).

Positions 1 to 89 (MENIYIALKT…ISSILRFSQE (89 aa)) are H-T-H motif-like. The riboflavin kinase stretch occupies residues 90–221 (LKLVGAVQDG…EVLASIDGKL (132 aa)). CDP is bound at residue 99-104 (GLGEGK). 2 residues coordinate Mg(2+): Thr128 and Asn130. Residues Ser185 and Glu192 each contribute to the FMN site. Residue 197 to 200 (KYLR) coordinates CDP.

This sequence belongs to the archaeal riboflavin kinase family. Mg(2+) is required as a cofactor.

It carries out the reaction riboflavin + CTP = CDP + FMN + H(+). It functions in the pathway cofactor biosynthesis; FMN biosynthesis; FMN from riboflavin (CTP route): step 1/1. In terms of biological role, catalyzes the CTP-dependent phosphorylation of riboflavin (vitamin B2) to form flavin mononucleotide (FMN). The chain is Riboflavin kinase (ribK) from Picrophilus torridus (strain ATCC 700027 / DSM 9790 / JCM 10055 / NBRC 100828 / KAW 2/3).